The primary structure comprises 221 residues: Ras-related protein RabS (221 aa).

GTP is bound at residue 16-23 (GDNQCGKS). Residues 38 to 47 (GIQLWHGIEI) carry the Effector region motif. Residues 71 to 75 (DGNGG) and 137 to 140 (NKCD) contribute to the GTP site. Cys-218 bears the Cysteine methyl ester mark. Cys-218 carries S-geranylgeranyl cysteine lipidation. Residues 219–221 (IIN) constitute a propeptide, removed in mature form.

Belongs to the small GTPase superfamily. Rab family.

Its subcellular location is the cell membrane. The polypeptide is Ras-related protein RabS (rabS) (Dictyostelium discoideum (Social amoeba)).